A 144-amino-acid chain; its full sequence is Large ribosomal subunit protein uL15 (144 aa).

Residues 1–54 are disordered; that stretch reads MRLNTLSPAEGSKKAGKRLGRGIGSGLGKTGGRGHKGQKSRSGGGVRRGFEGGQ. Positions 21–31 are enriched in gly residues; that stretch reads RGIGSGLGKTG.

Belongs to the universal ribosomal protein uL15 family. In terms of assembly, part of the 50S ribosomal subunit.

In terms of biological role, binds to the 23S rRNA. This Salmonella arizonae (strain ATCC BAA-731 / CDC346-86 / RSK2980) protein is Large ribosomal subunit protein uL15.